The primary structure comprises 747 residues: DNA topoisomerase 4 subunit A (747 aa).

In terms of domain architecture, Topo IIA-type catalytic spans 35 to 498 (LPFIGDGLKP…EAKMISESDM (464 aa)). Tyr-124 serves as the catalytic O-(5'-phospho-DNA)-tyrosine intermediate.

It belongs to the type II topoisomerase GyrA/ParC subunit family. ParC type 1 subfamily. As to quaternary structure, heterotetramer composed of ParC and ParE.

It is found in the cell membrane. The catalysed reaction is ATP-dependent breakage, passage and rejoining of double-stranded DNA.. In terms of biological role, topoisomerase IV is essential for chromosome segregation. It relaxes supercoiled DNA. Performs the decatenation events required during the replication of a circular DNA molecule. This Haemophilus influenzae (strain ATCC 51907 / DSM 11121 / KW20 / Rd) protein is DNA topoisomerase 4 subunit A.